Here is a 223-residue protein sequence, read N- to C-terminus: Phosphoribosylformylglycinamidine synthase subunit PurQ (223 aa).

Residues Phe-4–Lys-223 form the Glutamine amidotransferase type-1 domain. Cys-85 acts as the Nucleophile in catalysis. Catalysis depends on residues His-196 and Glu-198.

Part of the FGAM synthase complex composed of 1 PurL, 1 PurQ and 2 PurS subunits.

The protein localises to the cytoplasm. The enzyme catalyses N(2)-formyl-N(1)-(5-phospho-beta-D-ribosyl)glycinamide + L-glutamine + ATP + H2O = 2-formamido-N(1)-(5-O-phospho-beta-D-ribosyl)acetamidine + L-glutamate + ADP + phosphate + H(+). It carries out the reaction L-glutamine + H2O = L-glutamate + NH4(+). The protein operates within purine metabolism; IMP biosynthesis via de novo pathway; 5-amino-1-(5-phospho-D-ribosyl)imidazole from N(2)-formyl-N(1)-(5-phospho-D-ribosyl)glycinamide: step 1/2. Functionally, part of the phosphoribosylformylglycinamidine synthase complex involved in the purines biosynthetic pathway. Catalyzes the ATP-dependent conversion of formylglycinamide ribonucleotide (FGAR) and glutamine to yield formylglycinamidine ribonucleotide (FGAM) and glutamate. The FGAM synthase complex is composed of three subunits. PurQ produces an ammonia molecule by converting glutamine to glutamate. PurL transfers the ammonia molecule to FGAR to form FGAM in an ATP-dependent manner. PurS interacts with PurQ and PurL and is thought to assist in the transfer of the ammonia molecule from PurQ to PurL. The polypeptide is Phosphoribosylformylglycinamidine synthase subunit PurQ (Thermococcus kodakarensis (strain ATCC BAA-918 / JCM 12380 / KOD1) (Pyrococcus kodakaraensis (strain KOD1))).